Here is a 277-residue protein sequence, read N- to C-terminus: Putative pyruvate, phosphate dikinase regulatory protein (277 aa).

156–163 contributes to the ADP binding site; sequence GVSRTSKT.

This sequence belongs to the pyruvate, phosphate/water dikinase regulatory protein family. PDRP subfamily.

The enzyme catalyses N(tele)-phospho-L-histidyl/L-threonyl-[pyruvate, phosphate dikinase] + ADP = N(tele)-phospho-L-histidyl/O-phospho-L-threonyl-[pyruvate, phosphate dikinase] + AMP + H(+). It catalyses the reaction N(tele)-phospho-L-histidyl/O-phospho-L-threonyl-[pyruvate, phosphate dikinase] + phosphate + H(+) = N(tele)-phospho-L-histidyl/L-threonyl-[pyruvate, phosphate dikinase] + diphosphate. Bifunctional serine/threonine kinase and phosphorylase involved in the regulation of the pyruvate, phosphate dikinase (PPDK) by catalyzing its phosphorylation/dephosphorylation. The polypeptide is Putative pyruvate, phosphate dikinase regulatory protein (Carboxydothermus hydrogenoformans (strain ATCC BAA-161 / DSM 6008 / Z-2901)).